Consider the following 333-residue polypeptide: Leucine carboxyl methyltransferase 1 (333 aa).

Residues Lys42, Arg82, Gly107, Asp131, 181–182 (DL), and Glu208 contribute to the S-adenosyl-L-methionine site.

Belongs to the methyltransferase superfamily. LCMT family.

It catalyses the reaction [phosphatase 2A protein]-C-terminal L-leucine + S-adenosyl-L-methionine = [phosphatase 2A protein]-C-terminal L-leucine methyl ester + S-adenosyl-L-homocysteine. Methylates the carboxyl group of the C-terminal leucine residue of protein phosphatase 2A catalytic subunits to form alpha-leucine ester residues. The polypeptide is Leucine carboxyl methyltransferase 1 (Caenorhabditis elegans).